Consider the following 349-residue polypeptide: uncharacterized protein (349 aa).

A helical transmembrane segment spans residues 221-241 (AFVVWIGSGLNIIWWTGIVLL). Residues 328-339 (VASAPPAVPSQP) are compositionally biased toward pro residues. The segment at 328 to 349 (VASAPPAVPSQPPEYSSVFPPV) is disordered.

Its subcellular location is the host membrane. This is an uncharacterized protein from Human cytomegalovirus (strain Merlin) (HHV-5).